The primary structure comprises 114 residues: Putative membrane protein insertion efficiency factor (114 aa).

Belongs to the UPF0161 family.

Its subcellular location is the cell inner membrane. Its function is as follows. Could be involved in insertion of integral membrane proteins into the membrane. In Wolinella succinogenes (strain ATCC 29543 / DSM 1740 / CCUG 13145 / JCM 31913 / LMG 7466 / NCTC 11488 / FDC 602W) (Vibrio succinogenes), this protein is Putative membrane protein insertion efficiency factor.